The sequence spans 70 residues: DNA-directed RNA polymerase subunit omega (70 aa).

This sequence belongs to the RNA polymerase subunit omega family. As to quaternary structure, the RNAP catalytic core consists of 2 alpha, 1 beta, 1 beta' and 1 omega subunit. When a sigma factor is associated with the core the holoenzyme is formed, which can initiate transcription.

It catalyses the reaction RNA(n) + a ribonucleoside 5'-triphosphate = RNA(n+1) + diphosphate. In terms of biological role, promotes RNA polymerase assembly. Latches the N- and C-terminal regions of the beta' subunit thereby facilitating its interaction with the beta and alpha subunits. The polypeptide is DNA-directed RNA polymerase subunit omega (Shouchella clausii (strain KSM-K16) (Alkalihalobacillus clausii)).